Consider the following 306-residue polypeptide: Mating type protein SmtA-1 (306 aa).

The alpha box DNA-binding region spans 49 to 104 (APKKKVNGFMGFRSYYSPLFSQFPQKARSPFMTILWQHDPFHNEWDFMCSVYSSIR).

The protein belongs to the MATALPHA1 family.

The protein resides in the nucleus. Mating type proteins are sequence specific DNA-binding proteins that act as master switches in fungal differentiation by controlling gene expression in a cell type-specific fashion. Transcriptional activator that induces the transcription of alpha-specific genes. The protein is Mating type protein SmtA-1 (SMTA1) of Sordaria macrospora (strain ATCC MYA-333 / DSM 997 / K(L3346) / K-hell).